The chain runs to 147 residues: Large ribosomal subunit protein bL9 (147 aa).

The protein belongs to the bacterial ribosomal protein bL9 family.

Functionally, binds to the 23S rRNA. The sequence is that of Large ribosomal subunit protein bL9 from Thermoanaerobacter pseudethanolicus (strain ATCC 33223 / 39E) (Clostridium thermohydrosulfuricum).